Here is a 297-residue protein sequence, read N- to C-terminus: Vacuolar protein sorting-associated protein 26C (297 aa).

It belongs to the VPS26 family. Component of the commander complex that is essential for endosomal recycling of transmembrane cargos; the commander complex is composed of the CCC subcomplex and the retriever subcomplex. Component of the heterotrimeric retriever complex consisting of VPS26C, VPS29 and VPS35L; within the complex interacts with VPS35L. Interacts with SNX17 (via C-terminus); the interaction is direct and associates SNX17 with the retriever complex. Interacts with SNX31; the interaction is direct.

It is found in the endosome. Its function is as follows. Component of the commander complex that is essential for endosomal recycling of transmembrane cargos; the commander complex is composed of the CCC subcomplex and the retriever subcomplex. Component of the retriever complex, which is a heterotrimeric complex related to retromer cargo-selective complex (CSC) and essential for retromer-independent retrieval and recycling of numerous cargos such as integrin alpha-5/beta-1 (ITGA5:ITGB1). The recruitment of the retriever complex to the endosomal membrane involves CCC and WASH complexes. In the endosomes, drives the retriever and recycling of NxxY-motif-containing cargo proteins by coupling to SNX17, a cargo essential for the homeostatic maintenance of numerous cell surface proteins associated with processes that include cell migration, cell adhesion, nutrient supply and cell signaling. This Mus musculus (Mouse) protein is Vacuolar protein sorting-associated protein 26C.